A 203-amino-acid polypeptide reads, in one-letter code: tRNA (pseudouridine(54)-N(1))-methyltransferase (203 aa).

S-adenosyl-L-methionine contacts are provided by L135 and G156.

It belongs to the methyltransferase superfamily. TrmY family. As to quaternary structure, homodimer.

It is found in the cytoplasm. It catalyses the reaction pseudouridine(54) in tRNA + S-adenosyl-L-methionine = N(1)-methylpseudouridine(54) in tRNA + S-adenosyl-L-homocysteine + H(+). Functionally, specifically catalyzes the N1-methylation of pseudouridine at position 54 (Psi54) in tRNAs. This is tRNA (pseudouridine(54)-N(1))-methyltransferase from Thermococcus onnurineus (strain NA1).